A 97-amino-acid chain; its full sequence is Mitochondrial import inner membrane translocase subunit Tim8 A (97 aa).

The Twin CX3C motif motif lies at 43-66 (CWEKCMDKPGPKLDSRAEACFVNC). 2 disulfides stabilise this stretch: Cys-43/Cys-66 and Cys-47/Cys-62. Phosphoserine occurs at positions 57, 87, 94, and 96.

It belongs to the small Tim family. In terms of assembly, heterohexamer; composed of 3 copies of TIMM8A and 3 copies of TIMM13, named soluble 70 kDa complex. Associates with the TIM22 complex, whose core is composed of TIMM22.

The protein localises to the mitochondrion inner membrane. Mitochondrial intermembrane chaperone that participates in the import and insertion of some multi-pass transmembrane proteins into the mitochondrial inner membrane. Also required for the transfer of beta-barrel precursors from the TOM complex to the sorting and assembly machinery (SAM complex) of the outer membrane. Acts as a chaperone-like protein that protects the hydrophobic precursors from aggregation and guide them through the mitochondrial intermembrane space. The TIMM8-TIMM13 complex mediates the import of proteins such as TIMM23, SLC25A12/ARALAR1 and SLC25A13/ARALAR2, while the predominant TIMM9-TIMM10 70 kDa complex mediates the import of much more proteins. The chain is Mitochondrial import inner membrane translocase subunit Tim8 A (TIMM8A) from Bos taurus (Bovine).